The following is a 372-amino-acid chain: Anhydro-N-acetylmuramic acid kinase (372 aa).

21–28 contacts ATP; that stretch reads GTSMDGVD.

This sequence belongs to the anhydro-N-acetylmuramic acid kinase family.

The catalysed reaction is 1,6-anhydro-N-acetyl-beta-muramate + ATP + H2O = N-acetyl-D-muramate 6-phosphate + ADP + H(+). Its pathway is amino-sugar metabolism; 1,6-anhydro-N-acetylmuramate degradation. It participates in cell wall biogenesis; peptidoglycan recycling. Its function is as follows. Catalyzes the specific phosphorylation of 1,6-anhydro-N-acetylmuramic acid (anhMurNAc) with the simultaneous cleavage of the 1,6-anhydro ring, generating MurNAc-6-P. Is required for the utilization of anhMurNAc either imported from the medium or derived from its own cell wall murein, and thus plays a role in cell wall recycling. The sequence is that of Anhydro-N-acetylmuramic acid kinase from Bordetella avium (strain 197N).